A 398-amino-acid chain; its full sequence is Cation channel sperm-associated protein 3 (398 aa).

Residues 1 to 48 (MSQHRHQRHSRVISSSPVDTTSVGFCPTFKKFKRNDDECRAFVKRVIM) lie on the Cytoplasmic side of the membrane. Residues 49 to 71 (SRFFKIIMISTVTSNAFFMALWT) traverse the membrane as a helical segment. The Extracellular segment spans residues 72-80 (SYDIRYRLF). The helical transmembrane segment at 81-107 (RLLEFSEIFFVSICTSELSMKVYVDPI) threads the bilayer. Residue N108 is a topological domain, cytoplasmic. The chain crosses the membrane as a helical span at residues 109–131 (YWKNGYNLLDVIIIIVMFLPYAL). Residues 132–143 (RQLMGKQFTYLY) lie on the Extracellular side of the membrane. A helical transmembrane segment spans residues 144-160 (IADGMQSLRILKLIGYS). The Cytoplasmic segment spans residues 161–168 (QGIRTLIT). Residues 169 to 195 (AVGQTVYTVASVLLLLFLLMYIFAILG) traverse the membrane as a helical segment. Residues 196-216 (FCLFGSPDNGDHDNWGNLAAA) lie on the Extracellular side of the membrane. The segment at residues 217–236 (FFTLFSLATVDGWTDLQKQL) is an intramembrane region (helical; Pore-forming). The Extracellular segment spans residues 237 to 242 (DNREFA). A helical membrane pass occupies residues 243–268 (LSRAFTIIFILLASFIFLNMFVGVMI). Topologically, residues 269–398 (MHTEDSIRKF…PQSLEKVDEK (130 aa)) are cytoplasmic.

This sequence belongs to the cation channel sperm-associated (TC 1.A.1.19) family. In terms of assembly, component of the CatSper complex or CatSpermasome composed of the core pore-forming members CATSPER1, CATSPER2, CATSPER3 and CATSPER4 as well as auxiliary members CATSPERB, CATSPERG, CATSPERD, CATSPERE, CATSPERZ, C2CD6/CATSPERT, TMEM249, TMEM262 and EFCAB9. HSPA1 may be an additional auxiliary complex member. The core complex members CATSPER1, CATSPER2, CATSPER3 and CATSPER4 form a heterotetrameric channel. The auxiliary CATSPERB, CATSPERG, CATSPERD and CATSPERE subunits form a pavilion-like structure over the pore which stabilizes the complex through interactions with CATSPER4, CATSPER3, CATSPER1 and CATSPER2 respectively. TMEM262/CATSPERH interacts with CATSPERB, further stabilizing the complex. C2CD6/CATSPERT interacts at least with CATSPERD and is required for targeting the CatSper complex in the flagellar membrane. In terms of tissue distribution, testis-specific.

Its subcellular location is the cell projection. The protein resides in the cilium. The protein localises to the flagellum membrane. It carries out the reaction Ca(2+)(in) = Ca(2+)(out). Its activity is regulated as follows. The CatSper calcium channel is indirectly activated by extracellular progesterone and prostaglandins following the sequence: progesterone &gt; PGF1-alpha = PGE1 &gt; PGA1 &gt; PGE2 &gt;&gt; PGD2. The CatSper calcium channel is directly inhibited by endocannabinoid 2-arachidonoylglycerol (2AG). Indirect activation by progesterone takes place via the following mechanism: progesterone binds and activates the acylglycerol lipase ABHD2, which in turn mediates hydrolysis of 2AG inhibitor, relieving inhibition of the CatSper channel. The primary effect of progesterone activation is to shift voltage dependence towards more physiological, negative membrane potentials; it is not mediated by metabotropic receptors and second messengers. Sperm capacitation enhances the effect of progesterone by providing additional negative shift. Also activated by the elevation of intracellular pH. Functionally, pore-forming subunit of the CatSper complex, a sperm-specific voltage-gated calcium channel that plays a central role in calcium-dependent physiological responses essential for successful fertilization, such as sperm hyperactivation, acrosome reaction and chemotaxis towards the oocyte. The chain is Cation channel sperm-associated protein 3 (CATSPER3) from Homo sapiens (Human).